A 1407-amino-acid chain; its full sequence is DNA-directed RNA polymerase subunit beta' (1407 aa).

Zn(2+) is bound by residues Cys-70, Cys-72, Cys-85, and Cys-88. Positions 460, 462, and 464 each coordinate Mg(2+). Residues Cys-814, Cys-888, Cys-895, and Cys-898 each coordinate Zn(2+).

It belongs to the RNA polymerase beta' chain family. The RNAP catalytic core consists of 2 alpha, 1 beta, 1 beta' and 1 omega subunit. When a sigma factor is associated with the core the holoenzyme is formed, which can initiate transcription. Requires Mg(2+) as cofactor. Zn(2+) serves as cofactor.

It carries out the reaction RNA(n) + a ribonucleoside 5'-triphosphate = RNA(n+1) + diphosphate. Its function is as follows. DNA-dependent RNA polymerase catalyzes the transcription of DNA into RNA using the four ribonucleoside triphosphates as substrates. In Erwinia tasmaniensis (strain DSM 17950 / CFBP 7177 / CIP 109463 / NCPPB 4357 / Et1/99), this protein is DNA-directed RNA polymerase subunit beta'.